Reading from the N-terminus, the 241-residue chain is NAD(P)H-hydrate epimerase (241 aa).

Positions 11–221 constitute a YjeF N-terminal domain; it reads AASLDKDLME…SIVEKYGLNC (211 aa). 65–69 is a (6S)-NADPHX binding site; the sequence is NNGGD. K(+)-binding residues include Asn-66 and Asp-127. (6S)-NADPHX-binding positions include 131–137 and Asp-160; that span reads GFSFGGP. Ser-163 serves as a coordination point for K(+).

It belongs to the NnrE/AIBP family. It depends on K(+) as a cofactor.

It is found in the cytoplasm. The protein localises to the mitochondrion. The enzyme catalyses (6R)-NADHX = (6S)-NADHX. The catalysed reaction is (6R)-NADPHX = (6S)-NADPHX. Its function is as follows. Catalyzes the epimerization of the S- and R-forms of NAD(P)HX, a damaged form of NAD(P)H that is a result of enzymatic or heat-dependent hydration. This is a prerequisite for the S-specific NAD(P)H-hydrate dehydratase to allow the repair of both epimers of NAD(P)HX. In Aspergillus fumigatus (strain ATCC MYA-4609 / CBS 101355 / FGSC A1100 / Af293) (Neosartorya fumigata), this protein is NAD(P)H-hydrate epimerase.